The primary structure comprises 131 residues: Large ribosomal subunit protein uL22c (131 aa).

This sequence belongs to the universal ribosomal protein uL22 family. In terms of assembly, part of the 50S ribosomal subunit.

It is found in the plastid. In terms of biological role, this protein binds specifically to 23S rRNA. Its function is as follows. The globular domain of the protein is located near the polypeptide exit tunnel on the outside of the subunit, while an extended beta-hairpin is found that lines the wall of the exit tunnel in the center of the 70S ribosome. The chain is Large ribosomal subunit protein uL22c (rpl22) from Aneura mirabilis (Parasitic liverwort).